The sequence spans 567 residues: Potassium-transporting ATPase potassium-binding subunit (567 aa).

12 helical membrane passes run G5–G25, T64–L84, G136–I156, L179–P199, I254–F274, W285–A305, V328–V350, I375–F395, M421–L441, I459–T481, I486–I506, and L529–A549.

Belongs to the KdpA family. The system is composed of three essential subunits: KdpA, KdpB and KdpC.

The protein localises to the cell inner membrane. Functionally, part of the high-affinity ATP-driven potassium transport (or Kdp) system, which catalyzes the hydrolysis of ATP coupled with the electrogenic transport of potassium into the cytoplasm. This subunit binds the periplasmic potassium ions and delivers the ions to the membrane domain of KdpB through an intramembrane tunnel. The polypeptide is Potassium-transporting ATPase potassium-binding subunit (Rhizobium rhizogenes (strain K84 / ATCC BAA-868) (Agrobacterium radiobacter)).